Here is a 180-residue protein sequence, read N- to C-terminus: Ribulose bisphosphate carboxylase small subunit, chloroplastic (180 aa).

A chloroplast-targeting transit peptide spans 1-57 (MASVVASAAVVTPFAASAASTTKSSQIVSVQAGLKAGVFGGKSEWQTKTQTNGSRVS).

Belongs to the RuBisCO small chain family. Heterohexadecamer of 8 large and 8 small subunits.

The protein resides in the plastid. It localises to the chloroplast. In terms of biological role, ruBisCO catalyzes two reactions: the carboxylation of D-ribulose 1,5-bisphosphate, the primary event in carbon dioxide fixation, as well as the oxidative fragmentation of the pentose substrate. Both reactions occur simultaneously and in competition at the same active site. Although the small subunit is not catalytic it is essential for maximal activity. The chain is Ribulose bisphosphate carboxylase small subunit, chloroplastic from Marchantia paleacea (Liverwort).